The sequence spans 382 residues: D-galactonate dehydratase (382 aa).

Position 183 (aspartate 183) interacts with Mg(2+). Histidine 185 acts as the Proton donor in catalysis. Residues glutamate 209 and glutamate 235 each contribute to the Mg(2+) site. Histidine 285 acts as the Proton acceptor in catalysis.

The protein belongs to the mandelate racemase/muconate lactonizing enzyme family. GalD subfamily. Mg(2+) serves as cofactor.

It carries out the reaction D-galactonate = 2-dehydro-3-deoxy-D-galactonate + H2O. It participates in carbohydrate acid metabolism; D-galactonate degradation; D-glyceraldehyde 3-phosphate and pyruvate from D-galactonate: step 1/3. Its function is as follows. Catalyzes the dehydration of D-galactonate to 2-keto-3-deoxy-D-galactonate. This is D-galactonate dehydratase from Klebsiella pneumoniae (strain 342).